Reading from the N-terminus, the 150-residue chain is Ribosomal RNA large subunit methyltransferase H (150 aa).

Residues leucine 71, glycine 100, and 118-123 (FSQMTF) contribute to the S-adenosyl-L-methionine site.

It belongs to the RNA methyltransferase RlmH family. Homodimer.

Its subcellular location is the cytoplasm. The catalysed reaction is pseudouridine(1915) in 23S rRNA + S-adenosyl-L-methionine = N(3)-methylpseudouridine(1915) in 23S rRNA + S-adenosyl-L-homocysteine + H(+). Functionally, specifically methylates the pseudouridine at position 1915 (m3Psi1915) in 23S rRNA. This is Ribosomal RNA large subunit methyltransferase H from Mycoplasmopsis agalactiae (strain NCTC 10123 / CIP 59.7 / PG2) (Mycoplasma agalactiae).